The sequence spans 331 residues: Serpentine receptor class alpha-1 (331 aa).

7 consecutive transmembrane segments (helical) span residues F22–V42, I57–S77, Y104–I124, V143–I163, F189–F209, I238–I258, and L274–F294.

Belongs to the nematode receptor-like protein sra family.

Its subcellular location is the membrane. The polypeptide is Serpentine receptor class alpha-1 (sra-1) (Caenorhabditis elegans).